The following is a 587-amino-acid chain: Cryptochrome-1 (587 aa).

Residues 3–132 enclose the Photolyase/cryptochrome alpha/beta domain; the sequence is VNAVHWFRKG…EVIVRISHTL (130 aa). Lysine 11 is covalently cross-linked (Glycyl lysine isopeptide (Lys-Gly) (interchain with G-Cter in ubiquitin)). Residues 50–54 carry the LIR 1 motif; sequence NRWRF. Phosphoserine; by AMPK is present on serine 71. The LIR 2 signature appears at 82 to 87; it reads DVFPRL. Residue lysine 107 forms a Glycyl lysine isopeptide (Lys-Gly) (interchain with G-Cter in ubiquitin) linkage. The LIR 3 signature appears at 151 to 156; it reads KRFQTL. Lysine 159 is covalently cross-linked (Glycyl lysine isopeptide (Lys-Gly) (interchain with G-Cter in ubiquitin)). Serine 247 bears the Phosphoserine; by MAPK mark. Serine 252 is an FAD binding site. Short sequence motifs (LIR) lie at residues 255-260 and 271-276; these read LRFGCL and DLYKKV. A Phosphoserine; by AMPK modification is found at serine 280. Residues 285–290 carry the LIR 6 motif; it reads SLYGQL. Residue glutamine 289 participates in FAD binding. Residue lysine 329 forms a Glycyl lysine isopeptide (Lys-Gly) (interchain with G-Cter in ubiquitin) linkage. The LIR 7 motif lies at 335 to 339; the sequence is TGFPW. Histidine 355 lines the FAD pocket. A required for inhibition of CLOCK-BMAL1-mediated transcription region spans residues 371 to 470; it reads WISWEEGMKV…LIGVNYPKPM (100 aa). An LIR 8 motif is present at residues 379 to 384; sequence KVFEEL. 387–389 is a binding site for FAD; that stretch reads DAD. Short sequence motifs (LIR) lie at residues 395-400, 411-416, and 430-435; these read GSWMWL, HCYCPV, and RRYLPV. The segment at 471-493 is interaction with TIMELESS; it reads VNHAEASRLNIERMKQIYQQLSR. Lysine 485 participates in a covalent cross-link: Glycyl lysine isopeptide (Lys-Gly) (interchain with G-Cter in ubiquitin). 2 consecutive short sequence motifs (LIR) follow at residues 486–491 and 492–497; these read QIYQQL and SRYRGL. The tract at residues 554–587 is disordered; sequence GSSSMGHGLSNGKRPSQEEDTQSIGPKVQRQSTN. At serine 569 the chain carries Phosphoserine.

This sequence belongs to the DNA photolyase class-1 family. As to quaternary structure, component of the circadian core oscillator, which includes the CRY proteins, CLOCK or NPAS2, BMAL1 or BMAL2, CSNK1D and/or CSNK1E, TIMELESS, and the PER proteins. Interacts directly with TIMELESS. Interacts directly with PER1, PER2 and PER3; interaction with PER2 inhibits its ubiquitination and vice versa. Interacts with FBXL21. Interacts with FBXL3. Interacts with CLOCK-BMAL1 independently of PER2 and DNA. Interacts with HDAC1, HDAC2 and SIN3B. Interacts with nuclear receptors AR, NR1D1, NR3C1/GR, RORA and RORC; the interaction with at least NR3C1/GR is ligand dependent. Interacts with PRKDC. Interacts with the G protein subunit alpha GNAS; the interaction may block GPCR-mediated regulation of cAMP concentrations. Interacts with PRMT5. Interacts with EZH2. Interacts with MYBBP1A, DOCK7, HNRNPU, RPL7A, RPL8 and RPS3. Interacts with PPP5C (via TPR repeats). Interacts with MAP1LC3B. Interacts with CLOCK. Interacts with BMAL1. Interacts weakly with HDAC3; this interaction is enhanced in the presence of FBXL3. Interacts with TRIM28, KCTD5 and DDB1 Interacts with HNF4A. Interacts with PSMD2 in a KDM8-dependent manner. Interacts with KDM8 in a FBXL3-dependent manner. Interacts with PPARG in a ligand-dependent manner. Interacts with PPARD (via domain NR LBD) and NR1I2 (via domain NR LBD) in a ligand-dependent manner. Interacts with PPARA, NR1I3 and VDR. The cofactor is FAD. (6R)-5,10-methylene-5,6,7,8-tetrahydrofolate is required as a cofactor. Post-translationally, phosphorylation on Ser-247 by MAPK is important for the inhibition of CLOCK-BMAL1-mediated transcriptional activity. Phosphorylation by CSNK1E requires interaction with PER1 or PER2. Phosphorylation at Ser-71 and Ser-280 by AMPK decreases protein stability. Phosphorylation at Ser-569 exhibits a robust circadian rhythm with a peak at CT8, increases protein stability, prevents SCF(FBXL3)-mediated degradation and is antagonized by interaction with PRKDC. In terms of processing, ubiquitinated by the SCF(FBXL3) and SCF(FBXL21) complexes, regulating the balance between degradation and stabilization. The SCF(FBXL3) complex is mainly nuclear and mediates ubiquitination and subsequent degradation of CRY1. In contrast, cytoplasmic SCF(FBXL21) complex-mediated ubiquitination leads to stabilize CRY1 and counteract the activity of the SCF(FBXL3) complex. The SCF(FBXL3) and SCF(FBXL21) complexes probably mediate ubiquitination at different Lys residues. Ubiquitination at Lys-11 and Lys-107 are specifically ubiquitinated by the SCF(FBXL21) complex but not by the SCF(FBXL3) complex. Ubiquitination may be inhibited by PER2. Deubiquitinated by USP7. Undergoes autophagy-mediated degradation in the liver in a time-dependent manner. Autophagic degradation of CRY1 (an inhibitor of gluconeogenesis) occurs during periods of reduced feeding allowing induction of gluconeogenesis and maintenance of blood glucose levels. As to expression, expressed in all tissues tested including spleen, liver, skeletal muscle, kidney, brain, intestine, eye, harderian gland, liver and heart. Highest levels in the eye, brain, kidney and harderian gland. In the brain, especially located to the suprachiasma nucleus (SCN).

The protein localises to the cytoplasm. It localises to the nucleus. Its function is as follows. Transcriptional repressor which forms a core component of the circadian clock. The circadian clock, an internal time-keeping system, regulates various physiological processes through the generation of approximately 24 hour circadian rhythms in gene expression, which are translated into rhythms in metabolism and behavior. It is derived from the Latin roots 'circa' (about) and 'diem' (day) and acts as an important regulator of a wide array of physiological functions including metabolism, sleep, body temperature, blood pressure, endocrine, immune, cardiovascular, and renal function. Consists of two major components: the central clock, residing in the suprachiasmatic nucleus (SCN) of the brain, and the peripheral clocks that are present in nearly every tissue and organ system. Both the central and peripheral clocks can be reset by environmental cues, also known as Zeitgebers (German for 'timegivers'). The predominant Zeitgeber for the central clock is light, which is sensed by retina and signals directly to the SCN. The central clock entrains the peripheral clocks through neuronal and hormonal signals, body temperature and feeding-related cues, aligning all clocks with the external light/dark cycle. Circadian rhythms allow an organism to achieve temporal homeostasis with its environment at the molecular level by regulating gene expression to create a peak of protein expression once every 24 hours to control when a particular physiological process is most active with respect to the solar day. Transcription and translation of core clock components (CLOCK, NPAS2, BMAL1, BMAL2, PER1, PER2, PER3, CRY1 and CRY2) plays a critical role in rhythm generation, whereas delays imposed by post-translational modifications (PTMs) are important for determining the period (tau) of the rhythms (tau refers to the period of a rhythm and is the length, in time, of one complete cycle). A diurnal rhythm is synchronized with the day/night cycle, while the ultradian and infradian rhythms have a period shorter and longer than 24 hours, respectively. Disruptions in the circadian rhythms contribute to the pathology of cardiovascular diseases, cancer, metabolic syndromes and aging. A transcription/translation feedback loop (TTFL) forms the core of the molecular circadian clock mechanism. Transcription factors, CLOCK or NPAS2 and BMAL1 or BMAL2, form the positive limb of the feedback loop, act in the form of a heterodimer and activate the transcription of core clock genes and clock-controlled genes (involved in key metabolic processes), harboring E-box elements (5'-CACGTG-3') within their promoters. The core clock genes: PER1/2/3 and CRY1/2 which are transcriptional repressors form the negative limb of the feedback loop and interact with the CLOCK|NPAS2-BMAL1|BMAL2 heterodimer inhibiting its activity and thereby negatively regulating their own expression. This heterodimer also activates nuclear receptors NR1D1/2 and RORA/B/G, which form a second feedback loop and which activate and repress BMAL1 transcription, respectively. CRY1 and CRY2 have redundant functions but also differential and selective contributions at least in defining the pace of the SCN circadian clock and its circadian transcriptional outputs. More potent transcriptional repressor in cerebellum and liver than CRY2, though more effective in lengthening the period of the SCN oscillator. On its side, CRY2 seems to play a critical role in tuning SCN circadian period by opposing the action of CRY1. With CRY2, is dispensable for circadian rhythm generation but necessary for the development of intercellular networks for rhythm synchrony. Capable of translocating circadian clock core proteins such as PER proteins to the nucleus. Interacts with CLOCK-BMAL1 independently of PER proteins and is found at CLOCK-BMAL1-bound sites, suggesting that CRY may act as a molecular gatekeeper to maintain CLOCK-BMAL1 in a poised and repressed state until the proper time for transcriptional activation. Represses the CLOCK-BMAL1 induced transcription of BHLHE40/DEC1, ATF4, MTA1, KLF10 and NAMPT. May repress circadian target genes expression in collaboration with HDAC1 and HDAC2 through histone deacetylation. Mediates the clock-control activation of ATR and modulates ATR-mediated DNA damage checkpoint. In liver, mediates circadian regulation of cAMP signaling and gluconeogenesis by binding to membrane-coupled G proteins and blocking glucagon-mediated increases in intracellular cAMP concentrations and CREB1 phosphorylation. Inhibits hepatic gluconeogenesis by decreasing nuclear FOXO1 levels that down-regulates gluconeogenic gene expression. Besides its role in the maintenance of the circadian clock, is also involved in the regulation of other processes. Represses glucocorticoid receptor NR3C1/GR-induced transcriptional activity by binding to glucocorticoid response elements (GREs). Plays a key role in glucose and lipid metabolism modulation, in part, through the transcriptional regulation of genes involved in these pathways, such as LEP or ACSL4. Represses PPARD and its target genes in the skeletal muscle and limits exercise capacity. Plays an essential role in the generation of circadian rhythms in the retina. Represses the transcriptional activity of NR1I2. The chain is Cryptochrome-1 (CRY1) from Spalax judaei (Judean Mountains blind mole rat).